A 317-amino-acid polypeptide reads, in one-letter code: Melanocyte-stimulating hormone receptor (317 aa).

The Extracellular segment spans residues 1 to 37 (MPVQGSQRRLLGSLNSTPTATPHLGLAANQTGAWCLE). N-linked (GlcNAc...) asparagine glycosylation occurs at Asn-29. Residues 38–63 (VSIPDGLFLSLGLVSLVENVLVVTAI) form a helical membrane-spanning segment. Over 64 to 72 (AKNRNLHSP) the chain is Cytoplasmic. Residues 73-93 (MYCFICCLALSDLLVSGSNML) form a helical membrane-spanning segment. At 94 to 118 (ETAVTLLLEAGALAARAAVVQQLDN) the chain is on the extracellular side. A helical transmembrane segment spans residues 119-140 (VIDVITCSSMLSSLCFLGAIAV). The Cytoplasmic segment spans residues 141–163 (DRYISIFYALRYHSIVTLPRARR). The chain crosses the membrane as a helical span at residues 164-183 (AVAAIWVASVLFSMLFIAYY). Residues 184–191 (DHAAVLLC) are Extracellular-facing. The chain crosses the membrane as a helical span at residues 192-211 (LVVFFLAMLVLMAVLYVHML). Residues 212–240 (ARACQHAQGIARLHKRQRPAHQGFGLKGA) are Cytoplasmic-facing. A helical transmembrane segment spans residues 241–266 (ATLTILLGIFFLCWGPFFLHLTLIVL). The Extracellular segment spans residues 267 to 279 (CPQHPTCSCIFKN). A helical membrane pass occupies residues 280 to 300 (FNLFLALIICNAIIDPLIYAF). The Cytoplasmic portion of the chain corresponds to 301–317 (RSQELRRTLKEVLLCSW). Cys-315 is lipidated: S-palmitoyl cysteine.

It belongs to the G-protein coupled receptor 1 family. Interacts with MGRN1, but does not undergo MGRN1-mediated ubiquitination; this interaction competes with GNAS-binding and thus inhibits agonist-induced cAMP production. Interacts with OPN3; the interaction results in a decrease in MC1R-mediated cAMP signaling and ultimately a decrease in melanin production in melanocytes.

It localises to the cell membrane. Receptor for MSH (alpha, beta and gamma) and ACTH. The activity of this receptor is mediated by G proteins which activate adenylate cyclase. Mediates melanogenesis, the production of eumelanin (black/brown) and phaeomelanin (red/yellow), via regulation of cAMP signaling in melanocytes. The chain is Melanocyte-stimulating hormone receptor (MC1R) from Allenopithecus nigroviridis (Allen's swamp monkey).